Here is a 241-residue protein sequence, read N- to C-terminus: Uridylate kinase (241 aa).

Residues 10–13 (KLSG), Gly53, and Arg57 each bind ATP. UMP contacts are provided by residues Asp72 and 133 to 140 (AGSPYFST). ATP contacts are provided by Asn161, Tyr167, and Asp170.

Belongs to the UMP kinase family. In terms of assembly, homohexamer.

It localises to the cytoplasm. The catalysed reaction is UMP + ATP = UDP + ADP. It participates in pyrimidine metabolism; CTP biosynthesis via de novo pathway; UDP from UMP (UMPK route): step 1/1. Inhibited by UTP. Functionally, catalyzes the reversible phosphorylation of UMP to UDP. The chain is Uridylate kinase from Onion yellows phytoplasma (strain OY-M).